The sequence spans 295 residues: Trimeric intracellular cation channel type A (295 aa).

The Lumenal portion of the chain corresponds to 1 to 18 (MELLSALSLGELALSFSR). Residues 19–39 (VPLFPVFDLSYFIVSILYLKY) form a helical membrane-spanning segment. Residues 40-51 (EPGAVELSRRHP) lie on the Cytoplasmic side of the membrane. The chain crosses the membrane as a helical span at residues 52–72 (VASWLCAMLHCFGSYILADLL). Residues 73-85 (LGEPLIDYFSNNS) lie on the Lumenal side of the membrane. Ca(2+) is bound at residue Gly74. A helical transmembrane segment spans residues 86-106 (SILLASAVWYLIFFCPLDLFY). Residues 107–144 (KCVCFLPVKLIFVAMKEVVRVRKIAVGIHHAHHHYHHG) lie on the Cytoplasmic side of the membrane. Lys122 and Arg126 together coordinate a 1,2-diacyl-sn-glycero-3-phospho-(1D-myo-inositol-4,5-bisphosphate). A helical membrane pass occupies residues 145–165 (WFIMIATGWVKGSGVALLSNV). At 166–178 (EQLLRGVWKPETN) the chain is on the lumenal side. The helical transmembrane segment at 179-199 (EILHMSFPTKASLYGAILFTL) threads the bilayer. The Cytoplasmic segment spans residues 200–209 (QQTRWLPVSK). A helical transmembrane segment spans residues 210–230 (ASLIFIFTMFMVSCKVFLTAT). Topologically, residues 231-234 (HSHS) are lumenal. The chain crosses the membrane as a helical span at residues 235–255 (SPFDVLEAYVCPVLFGTGSGG). The Cytoplasmic segment spans residues 256 to 295 (DHPQDNHGAWPGGPPSGALATKSKEELSEGSRKKKTKKAD). A disordered region spans residues 256-295 (DHPQDNHGAWPGGPPSGALATKSKEELSEGSRKKKTKKAD). The span at 277–286 (KSKEELSEGS) shows a compositional bias: basic and acidic residues.

This sequence belongs to the TMEM38 family. Homotrimer; conformation seems to be controled by binding to diacylglycerol (DAG).

The protein localises to the sarcoplasmic reticulum membrane. It localises to the nucleus membrane. It catalyses the reaction K(+)(in) = K(+)(out). Its activity is regulated as follows. Channel activity is activated by a change of voltage within the sarcoplasmic reticulum lumen and blocked by luminal high Ca(2+) levels. Intracellular monovalent cation channel required for maintenance of rapid intracellular calcium release. Acts as a potassium counter-ion channel that functions in synchronization with calcium release from intracellular stores. Opened by a change of voltage within the sarcoplasmic reticulum lumen. The polypeptide is Trimeric intracellular cation channel type A (Oryctolagus cuniculus (Rabbit)).